The sequence spans 513 residues: L-threonine dehydratase biosynthetic IlvA (513 aa).

Lys-61 bears the N6-(pyridoxal phosphate)lysine mark. Pyridoxal 5'-phosphate contacts are provided by residues Asn-88, 187–191, and Ser-314; that span reads GGGGL. 2 consecutive ACT-like domains span residues 338 to 409 and 432 to 504; these read ALLA…DLSN and RLYS…DVTE.

It belongs to the serine/threonine dehydratase family. In terms of assembly, homotetramer. The cofactor is pyridoxal 5'-phosphate.

The enzyme catalyses L-threonine = 2-oxobutanoate + NH4(+). It participates in amino-acid biosynthesis; L-isoleucine biosynthesis; 2-oxobutanoate from L-threonine: step 1/1. In terms of biological role, catalyzes the anaerobic formation of alpha-ketobutyrate and ammonia from threonine in a two-step reaction. The first step involved a dehydration of threonine and a production of enamine intermediates (aminocrotonate), which tautomerizes to its imine form (iminobutyrate). Both intermediates are unstable and short-lived. The second step is the nonenzymatic hydrolysis of the enamine/imine intermediates to form 2-ketobutyrate and free ammonia. In the low water environment of the cell, the second step is accelerated by RidA. The protein is L-threonine dehydratase biosynthetic IlvA (ilvA) of Pasteurella multocida (strain Pm70).